Here is a 178-residue protein sequence, read N- to C-terminus: Ribosome maturation factor RimM (178 aa).

Residues 101–178 (ADEYYWYQLV…VMRVEWDADF (78 aa)) enclose the PRC barrel domain.

It belongs to the RimM family. Binds ribosomal protein uS19.

The protein resides in the cytoplasm. Its function is as follows. An accessory protein needed during the final step in the assembly of 30S ribosomal subunit, possibly for assembly of the head region. Essential for efficient processing of 16S rRNA. May be needed both before and after RbfA during the maturation of 16S rRNA. It has affinity for free ribosomal 30S subunits but not for 70S ribosomes. The protein is Ribosome maturation factor RimM of Pseudomonas putida (strain GB-1).